Reading from the N-terminus, the 165-residue chain is MRHIAAADTGDDEGEGLLVRRIKNGTVIDHIDGGEALNVIRILGISGTTNEALSIATNVPSKHMGSTKDIVKISNRELSKEEVDRIALISPNATINIIRHFKVCEKQGVEIPTVIEGSVRCPNPGCITRTNEPIRTRFAVLPDGKGLRCLYCDSVITKDLTSYII.

Zn(2+) contacts are provided by Cys121, Cys126, Cys149, and Cys152.

Belongs to the PyrI family. In terms of assembly, contains catalytic and regulatory chains. Requires Zn(2+) as cofactor.

Involved in allosteric regulation of aspartate carbamoyltransferase. This Methanoregula boonei (strain DSM 21154 / JCM 14090 / 6A8) protein is Aspartate carbamoyltransferase regulatory chain.